Reading from the N-terminus, the 304-residue chain is CRISPR-associated endonuclease Cas1 (304 aa).

3 residues coordinate Mn(2+): E148, H204, and E219.

It belongs to the CRISPR-associated endonuclease Cas1 family. As to quaternary structure, homodimer, forms a heterotetramer with a Cas2 homodimer. The cofactor is Mg(2+). Requires Mn(2+) as cofactor.

Functionally, CRISPR (clustered regularly interspaced short palindromic repeat), is an adaptive immune system that provides protection against mobile genetic elements (viruses, transposable elements and conjugative plasmids). CRISPR clusters contain spacers, sequences complementary to antecedent mobile elements, and target invading nucleic acids. CRISPR clusters are transcribed and processed into CRISPR RNA (crRNA). Acts as a dsDNA endonuclease. Involved in the integration of spacer DNA into the CRISPR cassette. The sequence is that of CRISPR-associated endonuclease Cas1 from Neisseria meningitidis serogroup C (strain 8013).